Consider the following 184-residue polypeptide: Large ribosomal subunit protein uL6 (184 aa).

This sequence belongs to the universal ribosomal protein uL6 family. As to quaternary structure, part of the 50S ribosomal subunit.

This protein binds to the 23S rRNA, and is important in its secondary structure. It is located near the subunit interface in the base of the L7/L12 stalk, and near the tRNA binding site of the peptidyltransferase center. This chain is Large ribosomal subunit protein uL6, found in Desulfitobacterium hafniense (strain Y51).